We begin with the raw amino-acid sequence, 185 residues long: Ribosome-recycling factor (185 aa).

The protein belongs to the RRF family.

The protein localises to the cytoplasm. Its function is as follows. Responsible for the release of ribosomes from messenger RNA at the termination of protein biosynthesis. May increase the efficiency of translation by recycling ribosomes from one round of translation to another. This chain is Ribosome-recycling factor, found in Ehrlichia ruminantium (strain Welgevonden).